A 244-amino-acid polypeptide reads, in one-letter code: ATP synthase subunit a (244 aa).

7 helical membrane passes run 17 to 37, 74 to 94, 112 to 132, 148 to 168, 171 to 191, 196 to 216, and 217 to 237; these read LSNVLMITIASIIVLLIAVLT, PFLALGVTLLMYIFVSNMLGL, DPAITMTLAVMVMGLTHYYGV, IPLLVPLKIIEEFANTLTLGL, YGNIFAGEILLGLLAGLATNF, IALGIIGTLGAIVPMIVWQAF, and SLFVGTIQAFIFTMLTMVYIS.

Belongs to the ATPase A chain family. In terms of assembly, F-type ATPases have 2 components, CF(1) - the catalytic core - and CF(0) - the membrane proton channel. CF(1) has five subunits: alpha(3), beta(3), gamma(1), delta(1), epsilon(1). CF(0) has three main subunits: a(1), b(2) and c(9-12). The alpha and beta chains form an alternating ring which encloses part of the gamma chain. CF(1) is attached to CF(0) by a central stalk formed by the gamma and epsilon chains, while a peripheral stalk is formed by the delta and b chains.

The protein localises to the cell membrane. In terms of biological role, key component of the proton channel; it plays a direct role in the translocation of protons across the membrane. The protein is ATP synthase subunit a of Bacillus pumilus (strain SAFR-032).